A 311-amino-acid polypeptide reads, in one-letter code: MPQHLVPHTGTGKRTTIEDFEIGRFLGRGKYGLVYLAREQSSKLVVALKVLYKSYIKSERVEGQVRRELDIHLNVRHINIIRLYTWFQDETRVFLVLEVAPYGELYQRLQQFGKFPLPVVSKIIRDVAQAIQYLHRKNIFHRDLKAENILICKGKETKEHTDAHNSDDSISVHEHELVRMAHYTYKIADFGWSVHHPTHGGRRRTQCGTLDYLPPEVMLGQSYDKACDIWSLGALCYELICGTAPFYHDEIKITRQNIANVEYSFTKDFSPASKDFIQRMLIRSPEARISIEDILRHPFLRQTDHRSKVPK.

The Protein kinase domain occupies 20–300; that stretch reads FEIGRFLGRG…IEDILRHPFL (281 aa). ATP is bound at residue lysine 49. The Proton acceptor role is filled by aspartate 143. Residues 189 to 216 form an activation loop region; it reads DFGWSVHHPTHGGRRRTQCGTLDYLPPE. Phosphothreonine; by autocatalysis is present on threonine 205. The short motif at 280 to 299 is the Destruction (D)-box element; that stretch reads MLIRSPEARISIEDILRHPF.

Belongs to the protein kinase superfamily. Ser/Thr protein kinase family. Aurora subfamily. In terms of assembly, interacts with EB1 (via C-terminal residues 101-238). Phosphorylated in mitosis and cytokinesis. Activated by autophosphorylation at Thr-205.

The protein resides in the nucleus. The protein localises to the cytoplasm. Its subcellular location is the cytoskeleton. It localises to the microtubule organizing center. It is found in the centrosome. The protein resides in the spindle. The protein localises to the spindle pole. Its subcellular location is the nucleus membrane. The catalysed reaction is L-seryl-[protein] + ATP = O-phospho-L-seryl-[protein] + ADP + H(+). It carries out the reaction L-threonyl-[protein] + ATP = O-phospho-L-threonyl-[protein] + ADP + H(+). Activated by cell-cycle phase specific phosphorylation. Inhibited by ATP-competitive inhibitors N-[4-[[6-Methoxy-7-[3-(4-morpholinyl)propoxy]-4-quinazolinyl]amino]phenyl]benzamide (ZM447439) and cyclopropanecarboxylic acid-(3-(4-(3-trifluoromethylphenylamino)-pyrimidin-2-ylamino)-phenyl)-amide (CFPPA). Inhibition leads to reduced growth, increased cytokinesis, microtubular defects, and increased ploidy of the cells. Functionally, involved in regulation of the cell cycle. Required for mitotic cell division and cytokinesis. Based on its localization to centrosomes and spindle microtubules, as well as to various cytoskeletal components such as the median body, parental attachment disk, and anterior and posterior-lateral paraflagellar dense rods, may coordinate reorganization and segregation of tubulin-containing structures during mitosis and cytokinesis. May regulate microtubule disassembly by phosphorylating cytoskeletal proteins leading to their destabilization. Phosphorylates EB1 at 'Ser-148' in vitro. Phosphorylates histone H3 in vitro. This is Aurora kinase from Giardia intestinalis (strain ATCC 50803 / WB clone C6) (Giardia lamblia).